Here is a 218-residue protein sequence, read N- to C-terminus: ATP phosphoribosyltransferase (218 aa).

This sequence belongs to the ATP phosphoribosyltransferase family. Short subfamily. As to quaternary structure, heteromultimer composed of HisG and HisZ subunits.

The protein localises to the cytoplasm. It carries out the reaction 1-(5-phospho-beta-D-ribosyl)-ATP + diphosphate = 5-phospho-alpha-D-ribose 1-diphosphate + ATP. The protein operates within amino-acid biosynthesis; L-histidine biosynthesis; L-histidine from 5-phospho-alpha-D-ribose 1-diphosphate: step 1/9. In terms of biological role, catalyzes the condensation of ATP and 5-phosphoribose 1-diphosphate to form N'-(5'-phosphoribosyl)-ATP (PR-ATP). Has a crucial role in the pathway because the rate of histidine biosynthesis seems to be controlled primarily by regulation of HisG enzymatic activity. The sequence is that of ATP phosphoribosyltransferase from Burkholderia thailandensis (strain ATCC 700388 / DSM 13276 / CCUG 48851 / CIP 106301 / E264).